Here is a 241-residue protein sequence, read N- to C-terminus: Histidine-rich protein PFHRP-III (241 aa).

Positions 1 to 21 (MVSFSKNKVLSAAVFASVLLL) are cleaved as a signal peptide. The segment covering 52 to 76 (AHAGDAHHAHHVADAHHAHHVADAH) has biased composition (basic and acidic residues). Disordered regions lie at residues 52–145 (AHAG…ANAH) and 195–241 (AHHD…HLHH). A compositionally biased stretch (low complexity) spans 84-145 (AHHAANAHHA…ANAHHAANAH (62 aa)). The segment covering 195–231 (AHHDGAHHDDAHHDGAHHDDAHHDGAHHDGAHHDGAH) has biased composition (basic and acidic residues).

This chain is Histidine-rich protein PFHRP-III, found in Plasmodium falciparum.